A 940-amino-acid polypeptide reads, in one-letter code: Leucine--tRNA ligase, mitochondrial (940 aa).

The short motif at 54-64 is the 'HIGH' region element; that stretch reads PYPSGALHMGH. Residues 638–642 carry the 'KMSKS' region motif; it reads TINKL. Lys-641 provides a ligand contact to ATP. Residues 724–744 are disordered; sequence KEQHQHQQQQHQQPLPSSEFN.

This sequence belongs to the class-I aminoacyl-tRNA synthetase family.

The protein resides in the mitochondrion. It carries out the reaction tRNA(Leu) + L-leucine + ATP = L-leucyl-tRNA(Leu) + AMP + diphosphate. This Dictyostelium discoideum (Social amoeba) protein is Leucine--tRNA ligase, mitochondrial (mleuS).